A 307-amino-acid polypeptide reads, in one-letter code: MTTDAPLPAPGREVHTLDALDSAQAESVLALLSEAARSDGRQAVSEQGRLRIRGGHRDGVRHFLLTVDGALAGYAQLEDTDPVEAPAAELVVHPDRRGHGHGRALGAALLAATGKRLRVWAHGGSSAARHLAQVLGLSLFRELRQLRRSLVPLDLAEPVLPEGVTVRTFEPGRDDAAWLAVNRAAFAHHPEQGSLTQQDLDDRKAEPWFDPKGFFLAERDGEIVGFHWTKVHAEERLGEVYVVGVLPEAQGGGLGKALTSIGLHHLAAEALPTAMLYVDADNTAAVTVYERMGFTTHEVDLMYRTES.

N-acetyltransferase domains are found at residues His15–Pro158 and Val164–Ser307. Glu46 contributes to the 1D-myo-inositol 2-(L-cysteinylamino)-2-deoxy-alpha-D-glucopyranoside binding site. Leu90–Val92 provides a ligand contact to acetyl-CoA. Positions 191, 230, and 239 each coordinate 1D-myo-inositol 2-(L-cysteinylamino)-2-deoxy-alpha-D-glucopyranoside. Acetyl-CoA is bound by residues Val243 to Val245 and Gln250 to Lys256. A 1D-myo-inositol 2-(L-cysteinylamino)-2-deoxy-alpha-D-glucopyranoside-binding site is contributed by Tyr277.

The protein belongs to the acetyltransferase family. MshD subfamily. Monomer.

It catalyses the reaction 1D-myo-inositol 2-(L-cysteinylamino)-2-deoxy-alpha-D-glucopyranoside + acetyl-CoA = mycothiol + CoA + H(+). Catalyzes the transfer of acetyl from acetyl-CoA to desacetylmycothiol (Cys-GlcN-Ins) to form mycothiol. The chain is Mycothiol acetyltransferase from Streptomyces griseus subsp. griseus (strain JCM 4626 / CBS 651.72 / NBRC 13350 / KCC S-0626 / ISP 5235).